Reading from the N-terminus, the 1019-residue chain is Outer capsid protein P3 (1019 aa).

It belongs to the phytoreovirus inner capsid protein P3 family. Homodimer. Homomultimer.

It is found in the virion. It localises to the host cytoplasm. Functionally, capsid protein which self-assembles to form the inner icosahedral capsid with a T=2 symmetry, and consisting of 60 P3 dimers. In Alopecurus aequalis (Barnyard grass), this protein is Outer capsid protein P3.